Here is a 117-residue protein sequence, read N- to C-terminus: Hemerythrin subunit alpha (117 aa).

Residues H24, H53, E57, H72, H76, H105, and D110 each coordinate Fe cation.

Belongs to the hemerythrin family. Octamer composed of two types of chains: alpha and beta.

Hemerythrin is a respiratory protein in blood cells of certain marine worms. The oxygen-binding site in each chain contains two iron atoms. This Lingula anatina (Brachiopod) protein is Hemerythrin subunit alpha.